Here is a 235-residue protein sequence, read N- to C-terminus: Enolase-phosphatase E1 (235 aa).

Belongs to the HAD-like hydrolase superfamily. MasA/MtnC family. Monomer. Requires Mg(2+) as cofactor.

It carries out the reaction 5-methylsulfanyl-2,3-dioxopentyl phosphate + H2O = 1,2-dihydroxy-5-(methylsulfanyl)pent-1-en-3-one + phosphate. It functions in the pathway amino-acid biosynthesis; L-methionine biosynthesis via salvage pathway; L-methionine from S-methyl-5-thio-alpha-D-ribose 1-phosphate: step 3/6. Its pathway is amino-acid biosynthesis; L-methionine biosynthesis via salvage pathway; L-methionine from S-methyl-5-thio-alpha-D-ribose 1-phosphate: step 4/6. Bifunctional enzyme that catalyzes the enolization of 2,3-diketo-5-methylthiopentyl-1-phosphate (DK-MTP-1-P) into the intermediate 2-hydroxy-3-keto-5-methylthiopentenyl-1-phosphate (HK-MTPenyl-1-P), which is then dephosphorylated to form the acireductone 1,2-dihydroxy-3-keto-5-methylthiopentene (DHK-MTPene). This chain is Enolase-phosphatase E1, found in Gluconacetobacter diazotrophicus (strain ATCC 49037 / DSM 5601 / CCUG 37298 / CIP 103539 / LMG 7603 / PAl5).